A 166-amino-acid polypeptide reads, in one-letter code: Phosphopantetheine adenylyltransferase (166 aa).

Serine 9 is a binding site for substrate. Residues 9–10 and histidine 17 each bind ATP; that span reads SY. Residues lysine 41, isoleucine 75, and lysine 89 each coordinate substrate. Residues 90–92, glutamate 100, and 124–130 contribute to the ATP site; these read GLR and LEHISSS.

This sequence belongs to the bacterial CoaD family. As to quaternary structure, homohexamer. Mg(2+) serves as cofactor.

The protein resides in the cytoplasm. The catalysed reaction is (R)-4'-phosphopantetheine + ATP + H(+) = 3'-dephospho-CoA + diphosphate. The protein operates within cofactor biosynthesis; coenzyme A biosynthesis; CoA from (R)-pantothenate: step 4/5. Reversibly transfers an adenylyl group from ATP to 4'-phosphopantetheine, yielding dephospho-CoA (dPCoA) and pyrophosphate. The sequence is that of Phosphopantetheine adenylyltransferase from Bifidobacterium longum (strain DJO10A).